Here is a 530-residue protein sequence, read N- to C-terminus: Cytochrome P450 monooxygenase ausG (530 aa).

A helical transmembrane segment spans residues 31 to 51; sequence LLVAYRLPGLLLLFSITIILF. A heme-binding site is contributed by C470.

Belongs to the cytochrome P450 family. Heme is required as a cofactor.

Its subcellular location is the membrane. Its pathway is secondary metabolite biosynthesis; terpenoid biosynthesis. Functionally, cytochrome P450 monooxygenase; part of the gene cluster B that mediates the biosynthesis of the fungal meroterpenoid acetoxydehydroaustin. The first step of the pathway is the synthesis of 3,5-dimethylorsellinic acid by the polyketide synthase ausA. 3,5-dimethylorsellinic acid is then prenylated by the polyprenyl transferase ausN. Further epoxidation by the FAD-dependent monooxygenase ausM and cyclization by the probable terpene cyclase ausL lead to the formation of protoaustinoid A. Protoaustinoid A is then oxidized to spiro-lactone preaustinoid A3 by the combined action of the FAD-binding monooxygenases ausB and ausC, and the dioxygenase ausE. Acid-catalyzed keto-rearrangement and ring contraction of the tetraketide portion of preaustinoid A3 by ausJ lead to the formation of preaustinoid A4. The aldo-keto reductase ausK, with the help of ausH, is involved in the next step by transforming preaustinoid A4 into isoaustinone which is in turn hydroxylated by the P450 monooxygenase ausI to form austinolide. The cytochrome P450 monooxygenase ausG then modifies austinolide to austinol. Austinol is further acetylated to austin by the O-acetyltransferase ausP, which spontaneously changes to dehydroaustin. The cytochrome P450 monooxygenase then converts dehydroaustin is into 7-dehydrodehydroaustin. The hydroxylation catalyzed by ausR permits the second O-acetyltransferase ausQ to add an additional acetyl group to the molecule, leading to the formation of acetoxydehydroaustin. Due to genetic rearrangements of the clusters and the subsequent loss of some enzymes, the end product of the Penicillium brasilianum austinoid biosynthesis clusters is acetoxydehydroaustin. This is Cytochrome P450 monooxygenase ausG from Penicillium brasilianum.